The sequence spans 152 residues: MSQLLDKAKNYVAEKVTNMPKPEASVTDVDFKRVSRDSVEYLAKVSVSNPYSTPIPICEIKYSLKSAGKEIASGTIPDPGSLKASDTTMLDVPVKVPHSILLSLAKDIGADWDIDYQLDLGLVIDLPVIGNFTIPLSQKGEIKLPTLSDMFA.

The protein belongs to the LEA type 2 family.

In Glycine max (Soybean), this protein is Desiccation protectant protein Lea14 homolog.